A 274-amino-acid chain; its full sequence is MQQLQNVIETAFERRADITPANVDTVTREAVNQVISLLDSGALRVAEKIDGQWVTHQWLKKAVLLSFRINDNQVIDGAESRYFDKVPMKFADYDEARFQKEGFRVVPPAAVRQGAFIARNTVLMPSYVNIGAYVDEGTMVDTWATVGSCAQIGKNVHLSGGVGIGGVLEPLQANPTIIEDNCFIGARSEVVEGVIVEEGSVISMGVYLGQSTKIYDRETGEVHYGRVPAGSVVVSGNLPSKDGKYSLYCAVIVKKVDAKTRGKVGINELLRTID.

Arg-104 and Asp-141 together coordinate substrate.

The protein belongs to the transferase hexapeptide repeat family. Homotrimer.

It localises to the cytoplasm. The catalysed reaction is (S)-2,3,4,5-tetrahydrodipicolinate + succinyl-CoA + H2O = (S)-2-succinylamino-6-oxoheptanedioate + CoA. The protein operates within amino-acid biosynthesis; L-lysine biosynthesis via DAP pathway; LL-2,6-diaminopimelate from (S)-tetrahydrodipicolinate (succinylase route): step 1/3. The protein is 2,3,4,5-tetrahydropyridine-2,6-dicarboxylate N-succinyltransferase of Salmonella arizonae (strain ATCC BAA-731 / CDC346-86 / RSK2980).